The following is a 287-amino-acid chain: Cell division protein ZipA (287 aa).

Residue M1 is a topological domain, periplasmic. Residues 2-22 (EIGLREWLIVIGIIVIAGILF) form a helical membrane-spanning segment. The Cytoplasmic portion of the chain corresponds to 23–287 (DGWRRMRGSK…ERRALTQRRG (265 aa)). Residues 48 to 140 (DEEETTSAEV…PTQRITEDKD (93 aa)) are disordered. Basic and acidic residues-rich tracts occupy residues 64–77 (LDTH…EHDL), 85–104 (REGK…KDEP), and 121–140 (GRDD…EDKD).

It belongs to the ZipA family. Interacts with FtsZ via their C-terminal domains.

The protein localises to the cell inner membrane. Functionally, essential cell division protein that stabilizes the FtsZ protofilaments by cross-linking them and that serves as a cytoplasmic membrane anchor for the Z ring. Also required for the recruitment to the septal ring of downstream cell division proteins. The sequence is that of Cell division protein ZipA from Pseudomonas syringae pv. syringae (strain B728a).